The following is a 460-amino-acid chain: A-type ATP synthase subunit B 1 (460 aa).

The protein belongs to the ATPase alpha/beta chains family. As to quaternary structure, has multiple subunits with at least A(3), B(3), C, D, E, F, H, I and proteolipid K(x).

It is found in the cell membrane. Functionally, component of the A-type ATP synthase that produces ATP from ADP in the presence of a proton gradient across the membrane. The B chain is a regulatory subunit. This is A-type ATP synthase subunit B 1 from Methanospirillum hungatei JF-1 (strain ATCC 27890 / DSM 864 / NBRC 100397 / JF-1).